Reading from the N-terminus, the 420-residue chain is Hemojuvelin (420 aa).

The N-terminal stretch at 1 to 32 is a signal peptide; that stretch reads MGQSPSPRSPHGSPPTLSTLTLLLLLCGQAHS. Y43 bears the Phosphotyrosine mark. An N-linked (GlcNAc...) asparagine glycan is attached at N111. The tract at residues 113–135 is disordered; that stretch reads SRQGPTAPPPARGPALPGAGPAP. Residues 125 to 134 show a composition bias toward low complexity; that stretch reads GPALPGAGPA. Disulfide bonds link C141/C223 and C160/C310. 2 N-linked (GlcNAc...) asparagine glycosylation sites follow: N206 and N365. D393 carries the GPI-anchor amidated aspartate lipid modification. Residues 394 to 420 constitute a propeptide, removed in mature form; sequence AGPPLSPAICLVPLLSALFVLWLCFSK.

It belongs to the repulsive guidance molecule (RGM) family. Interacts with BMP2 and BMP4. Interacts with BMP6. Interacts with BMPR1B. Interacts with TMPRSS6. In terms of processing, autocatalytically cleaved at low pH; the two chains remain linked via two disulfide bonds. Also proteolytically processed by TMPRSS6, several fragments being released in the extracellular space; regulates HJV activity in BMP signaling and thefore iron homeostasis. As to expression, muscle cell lineage.

The protein resides in the cell membrane. In terms of biological role, acts as a bone morphogenetic protein (BMP) coreceptor. Through enhancement of BMP signaling regulates hepcidin (HAMP) expression and regulates iron homeostasis. This is Hemojuvelin from Mus musculus (Mouse).